Consider the following 1793-residue polypeptide: uncharacterized protein (1793 aa).

Disordered regions lie at residues 156 to 189 (ARQA…ASSQ), 204 to 362 (QRES…PPKV), and 407 to 505 (ASFG…SGAA). A compositionally biased stretch (polar residues) spans 166 to 175 (SSAQDSQELK). The segment covering 227-237 (SPKEKAQDEPS) has biased composition (basic and acidic residues). Over residues 238-247 (SKTPSPQNNP) the composition is skewed to polar residues. The span at 248–258 (ASSQLSRSQHS) shows a compositional bias: low complexity. Positions 277 to 288 (KAEEDGLSKMED) are enriched in basic and acidic residues. Low complexity predominate over residues 289–307 (STTSTGALATSSSSLGFES). A compositionally biased stretch (gly residues) spans 317–342 (AVGGEGEKISGGGGGGKGGGGGGAGD). The segment covering 434–450 (STTPSTNTTRTPSPTSS) has biased composition (low complexity). The segment covering 463–476 (DTSSTEVGSGPSDS) has biased composition (polar residues). Positions 485–505 (PGTAPLTEPLPETPEAASGAA) are enriched in low complexity. Phosphothreonine is present on T733. Disordered stretches follow at residues 757–809 (RSES…SKFA), 829–917 (MERG…FTDG), 1090–1147 (RDIR…GSGS), 1161–1187 (QRED…NSSS), 1229–1249 (QKTP…ATKP), 1408–1465 (TGGV…KSNS), and 1482–1567 (GELL…PLPF). 2 stretches are compositionally biased toward basic and acidic residues: residues 829-839 (MERGEVMDTSH) and 846-872 (KETE…HSEA). Over residues 1113–1123 (KGSGDSSDKGS) the composition is skewed to low complexity. Positions 1161-1174 (QREDSMDREPRESM) are enriched in basic and acidic residues. The residue at position 1187 (S1187) is a Phosphoserine. Residues 1231-1246 (TPEKLKEEEVKEEGKA) are compositionally biased toward basic and acidic residues. Residues 1513 to 1528 (SQVPSSSKGSQVSGTS) show a composition bias toward low complexity. Pro residues predominate over residues 1546 to 1555 (PPGPQSPEHP). R1774 carries the omega-N-methylarginine modification.

In terms of tissue distribution, expressed in muscle, heart, kidney and liver but barely detectable in lung, pancreas and brain. In liver veins, expressed in hepatic vein, extrahepatic portal vein and intrahepatic portal vein.

This is an uncharacterized protein from Homo sapiens (Human).